A 67-amino-acid polypeptide reads, in one-letter code: MASLKKSLFLVLFLGMVSLSICDKEKREGENEEEEEEHEEESEEKRGLLSFLPKVIGVIGHLIHPPS.

The signal sequence occupies residues 1 to 22 (MASLKKSLFLVLFLGMVSLSIC). Positions 23–46 (DKEKREGENEEEEEEHEEESEEKR) are excised as a propeptide. Residues 24 to 46 (KEKREGENEEEEEEHEEESEEKR) are disordered. The segment covering 30–42 (ENEEEEEEHEEES) has biased composition (acidic residues).

Expressed by the skin glands.

Its subcellular location is the secreted. Fallaxidin-4.1 shows antibacterial activity against the Gram-positive bacteria L.lactis (MIC=12 uM), M.luteus (MIC=100 uM), S.epidermidis (MIC=100 uM) and S.uberis (MIC=50 uM). No antibacterial activity against the Gram-positive bacteria B.cereus, E.faecalis, L.innocua, S.aureus, or the Gram-negative bacteria E.cloacae and E.coli. Inhibits the formation of NO by neuronal nitric oxide synthase with an IC(50) of 13.3 uM. This chain is Preprofallaxidin-1, found in Litoria fallax (Eastern dwarf tree frog).